A 52-amino-acid polypeptide reads, in one-letter code: Large ribosomal subunit protein bL33 (52 aa).

This sequence belongs to the bacterial ribosomal protein bL33 family.

This is Large ribosomal subunit protein bL33 from Campylobacter jejuni subsp. doylei (strain ATCC BAA-1458 / RM4099 / 269.97).